The sequence spans 188 residues: MSKAGASLATCYGPVSADVMAKAENIRLLILDVDGVLSDGLIYMGNNGEELKAFNVRDGYGIRCALTSDIEVAIITGRKAKLVEDRCATLGITHLYQGQSNKLIAFSDLLEKLAIAPENVAYVGDDLIDWPVMEKVGLSVAVADAHPLLIPRADYVTRIAGGRGAVREVCDLLLLAQGKLDEAKGQSI.

Mg(2+) is bound by residues Asp32 and Asp34. Substrate contacts are provided by residues Asp34, Asn55–Gly59, Arg63, Arg78, Arg86, and Lys102. Asp125 contributes to the Mg(2+) binding site.

Homotetramer. The cofactor is Mg(2+). Co(2+) is required as a cofactor.

The enzyme catalyses 3-deoxy-alpha-D-manno-2-octulosonate-8-phosphate + H2O = 3-deoxy-alpha-D-manno-oct-2-ulosonate + phosphate. Its pathway is carbohydrate biosynthesis; 3-deoxy-D-manno-octulosonate biosynthesis; 3-deoxy-D-manno-octulosonate from D-ribulose 5-phosphate: step 3/3. It participates in bacterial outer membrane biogenesis; lipopolysaccharide biosynthesis. Inhibited by calcium, cadmium, mercury, and copper ions. In terms of biological role, catalyzes the hydrolysis of 3-deoxy-D-manno-octulosonate 8-phosphate (KDO 8-P) to 3-deoxy-D-manno-octulosonate (KDO) and inorganic phosphate. The sequence is that of 3-deoxy-D-manno-octulosonate 8-phosphate phosphatase KdsC from Escherichia coli (strain B / BL21-DE3).